Reading from the N-terminus, the 99-residue chain is Biogenesis of lysosome-related organelles complex 1 subunit SNN1 (99 aa).

Positions 34-94 (SINELRESQA…VVLKRYEKMV (61 aa)) form a coiled coil.

This sequence belongs to the SNAPIN family. As to quaternary structure, component of the biogenesis of lysosome-related organelles complex-1 (BLOC-1).

The protein localises to the endosome. In terms of biological role, component of the biogenesis of lysosome-related organelles complex-1 (BLOC-1), a complex involved in endosomal cargo sorting. The polypeptide is Biogenesis of lysosome-related organelles complex 1 subunit SNN1 (SNN1) (Kluyveromyces lactis (strain ATCC 8585 / CBS 2359 / DSM 70799 / NBRC 1267 / NRRL Y-1140 / WM37) (Yeast)).